We begin with the raw amino-acid sequence, 264 residues long: H-2 class II histocompatibility antigen, E-Q beta chain (264 aa).

The first 26 residues, 1–26 (MVWLPRVPCVAAVILLLTVLSPPVAL), serve as a signal peptide directing secretion. Residues 27–121 (VRDSRPWFLE…IFDNFLVRRR (95 aa)) form a beta-1 region. Residues 27-225 (VRDSRPWFLE…KAQSTSAQNK (199 aa)) are Extracellular-facing. 2 disulfides stabilise this stretch: C38–C106 and C144–C200. N46 is a glycosylation site (N-linked (GlcNAc...) asparagine). A beta-2 region spans residues 122–225 (VEPTVTVYPT…KAQSTSAQNK (104 aa)). The Ig-like C1-type domain occupies 124–214 (PTVTVYPTKT…PSLTDPVTVE (91 aa)). The helical transmembrane segment at 226–246 (MLSGVGGFVLGLLFLGAGLFI) threads the bilayer. The Cytoplasmic segment spans residues 247–264 (YFRNQKGQSGLQPTGLLS).

The protein belongs to the MHC class II family.

It is found in the membrane. This is H-2 class II histocompatibility antigen, E-Q beta chain from Mus musculus (Mouse).